Consider the following 70-residue polypeptide: Putative membrane protein insertion efficiency factor (70 aa).

It belongs to the UPF0161 family.

Its subcellular location is the cell inner membrane. In terms of biological role, could be involved in insertion of integral membrane proteins into the membrane. The sequence is that of Putative membrane protein insertion efficiency factor from Desulforapulum autotrophicum (strain ATCC 43914 / DSM 3382 / VKM B-1955 / HRM2) (Desulfobacterium autotrophicum).